A 330-amino-acid chain; its full sequence is Aspartate--ammonia ligase (330 aa).

It belongs to the class-II aminoacyl-tRNA synthetase family. AsnA subfamily.

Its subcellular location is the cytoplasm. The enzyme catalyses L-aspartate + NH4(+) + ATP = L-asparagine + AMP + diphosphate + H(+). Its pathway is amino-acid biosynthesis; L-asparagine biosynthesis; L-asparagine from L-aspartate (ammonia route): step 1/1. The chain is Aspartate--ammonia ligase from Mannheimia succiniciproducens (strain KCTC 0769BP / MBEL55E).